We begin with the raw amino-acid sequence, 283 residues long: Thymidylate synthase (283 aa).

Arg-22 is a dUMP binding site. Cys-160 serves as the catalytic Nucleophile. DUMP is bound by residues 180-183 (RSCD), Asn-191, and 221-223 (HIY). Asp-183 contacts (6R)-5,10-methylene-5,6,7,8-tetrahydrofolate. Ser-282 provides a ligand contact to (6R)-5,10-methylene-5,6,7,8-tetrahydrofolate.

This sequence belongs to the thymidylate synthase family. Bacterial-type ThyA subfamily. In terms of assembly, homodimer.

Its subcellular location is the cytoplasm. The catalysed reaction is dUMP + (6R)-5,10-methylene-5,6,7,8-tetrahydrofolate = 7,8-dihydrofolate + dTMP. It participates in pyrimidine metabolism; dTTP biosynthesis. Catalyzes the reductive methylation of 2'-deoxyuridine-5'-monophosphate (dUMP) to 2'-deoxythymidine-5'-monophosphate (dTMP) while utilizing 5,10-methylenetetrahydrofolate (mTHF) as the methyl donor and reductant in the reaction, yielding dihydrofolate (DHF) as a by-product. This enzymatic reaction provides an intracellular de novo source of dTMP, an essential precursor for DNA biosynthesis. The polypeptide is Thymidylate synthase (Tolumonas auensis (strain DSM 9187 / NBRC 110442 / TA 4)).